The sequence spans 436 residues: Prenyltransferase nscD (436 aa).

The protein belongs to the tryptophan dimethylallyltransferase family.

It functions in the pathway secondary metabolite biosynthesis. In terms of biological role, prenyltransferase; part of the gene cluster that mediates the biosynthesis of neosartoricin B, a prenylated anthracenone that probably exhibits T-cell antiproliferative activity, suggestive of a physiological role as an immunosuppressive agent. The non-reducing polyketide synthase nscA probably synthesizes and cyclizes the decaketide backbone. The hydrolase nscB then mediates the product release through hydrolysis followed by spontaneous decarboxylation. The prenyltransferase nscD catalyzes the addition of the dimethylallyl group to the aromatic C5. The FAD-dependent monooxygenase nscC is then responsible for the stereospecific hydroxylation at C2. Neosartoricin B can be converted into two additional compounds neosartoricins C and D. Neosartoricin C is a spirocyclic compound that is cyclized through the attack of C3 hydroxyl on C14, followed by dehydration. On the other hand, neosartoricin D is a further cyclized compound in which attack of C2 on C14 in neosartoricin C results in the formation of the acetal-containing dioxabicyclo-octanone ring. Both of these compounds are novel and possibly represent related metabolites of the gene cluster. This chain is Prenyltransferase nscD, found in Trichophyton tonsurans (strain CBS 112818) (Scalp ringworm fungus).